The chain runs to 70 residues: Large ribosomal subunit protein eL38 (70 aa).

It belongs to the eukaryotic ribosomal protein eL38 family.

This is Large ribosomal subunit protein eL38 (rpl-38) from Caenorhabditis elegans.